The chain runs to 217 residues: FGFR1 oncogene partner 2 homolog (217 aa).

Coiled coils occupy residues 6–106 (TIEK…MSKY) and 163–188 (KEQE…TRES). The segment at 194 to 217 (KEDASESTSLSGLVTSSDLSLRKS) is disordered. The span at 199–217 (ESTSLSGLVTSSDLSLRKS) shows a compositional bias: polar residues.

Belongs to the SIKE family.

Its subcellular location is the cytoplasm. The chain is FGFR1 oncogene partner 2 homolog (FGFR1OP2) from Gallus gallus (Chicken).